Here is a 433-residue protein sequence, read N- to C-terminus: GPI mannosyltransferase 2 (433 aa).

The next 9 helical transmembrane spans lie at 4–24, 109–129, 148–165, 172–194, 204–226, 247–267, 322–342, 354–374, and 410–430; these read LVKPVLFFVVVRIVQYAIISL, TAVILENLIYFMAMITLFYLT, ATFTAILFSCNSGSGFFT, LSFLFSFLGILAREFSVTPIIPY, FYYTIVSSFCFTIATLNRSNCIL, ALLFPVLAGCIVALFFVRQQF, IPNFLFGLPTFVILFSSTFYF, LIFITRAFTIIILLFAHVQII, and GYIYWLIFWVPIQTSLFVFFL.

It belongs to the PIGV family.

It is found in the endoplasmic reticulum membrane. It functions in the pathway glycolipid biosynthesis; glycosylphosphatidylinositol-anchor biosynthesis. Its function is as follows. Mannosyltransferase involved in glycosylphosphatidylinositol-anchor biosynthesis. Transfers the second mannose to the glycosylphosphatidylinositol during GPI precursor assembly. The polypeptide is GPI mannosyltransferase 2 (GPI18) (Candida glabrata (strain ATCC 2001 / BCRC 20586 / JCM 3761 / NBRC 0622 / NRRL Y-65 / CBS 138) (Yeast)).